Consider the following 468-residue polypeptide: UDP-N-acetylmuramate--L-alanine ligase (468 aa).

ATP is bound at residue 112–118; sequence GTHGKTT.

This sequence belongs to the MurCDEF family.

The protein resides in the cytoplasm. The enzyme catalyses UDP-N-acetyl-alpha-D-muramate + L-alanine + ATP = UDP-N-acetyl-alpha-D-muramoyl-L-alanine + ADP + phosphate + H(+). Its pathway is cell wall biogenesis; peptidoglycan biosynthesis. Cell wall formation. This Bordetella petrii (strain ATCC BAA-461 / DSM 12804 / CCUG 43448) protein is UDP-N-acetylmuramate--L-alanine ligase.